The primary structure comprises 120 residues: Large ribosomal subunit protein uL22 (120 aa).

This sequence belongs to the universal ribosomal protein uL22 family. As to quaternary structure, part of the 50S ribosomal subunit.

Its function is as follows. This protein binds specifically to 23S rRNA; its binding is stimulated by other ribosomal proteins, e.g. L4, L17, and L20. It is important during the early stages of 50S assembly. It makes multiple contacts with different domains of the 23S rRNA in the assembled 50S subunit and ribosome. Functionally, the globular domain of the protein is located near the polypeptide exit tunnel on the outside of the subunit, while an extended beta-hairpin is found that lines the wall of the exit tunnel in the center of the 70S ribosome. The polypeptide is Large ribosomal subunit protein uL22 (Oenococcus oeni (strain ATCC BAA-331 / PSU-1)).